We begin with the raw amino-acid sequence, 675 residues long: Vitamin K-dependent protein S (675 aa).

Residues 1-24 (MRVLGGRTGTLLACLALVLPVLEA) form the signal peptide. Positions 25 to 41 (NFLSRQHASQVLIRRRR) are excised as a propeptide. The Gla domain maps to 42–87 (ANTLLEETKKGNLERECIEELCNKEEAREIFENNPETEYFYPKYLG). 4-carboxyglutamate occurs at positions 47, 48, 55, 57, 60, 61, 66, 67, 70, 73, and 77. The cysteines at positions 58 and 63 are disulfide-linked. Cystine bridges form between cysteine 88–cysteine 113, cysteine 121–cysteine 134, cysteine 126–cysteine 143, cysteine 145–cysteine 154, cysteine 161–cysteine 175, cysteine 171–cysteine 184, cysteine 186–cysteine 199, cysteine 205–cysteine 217, cysteine 212–cysteine 226, cysteine 228–cysteine 241, cysteine 247–cysteine 256, cysteine 252–cysteine 265, cysteine 267–cysteine 282, cysteine 288–cysteine 567, cysteine 449–cysteine 475, and cysteine 638–cysteine 665. The thrombin-sensitive stretch occupies residues 88-116 (CLGSFRAGLFTAARLSTNAYPDLRSCVNA). An EGF-like 1 domain is found at 117–155 (ISDQCNPLPCNEDGFMTCKDGQATFTCICKSGWQGEKCE). Aspartate 136 carries the post-translational modification (3R)-3-hydroxyaspartate. Positions 157 to 200 (DINECKDPVNINGGCSQICENTPGSYHCSCKNGFVMLSNKKDCK) constitute an EGF-like 2; calcium-binding domain. The residue at position 177 (asparagine 177) is a (3R)-3-hydroxyasparagine. The region spanning 201–242 (DVDECVLKPSICGTAVCKNIPGDFECECAEGYKYNPVSKSCD) is the EGF-like 3; calcium-binding domain. Asparagine 219 is subject to (3R)-3-hydroxyasparagine. Positions 243–283 (DVDECAENLCAQLCVNYPGGYSCYCDGKKGFKLAQDQKSCE) constitute an EGF-like 4; calcium-binding domain. (3R)-3-hydroxyasparagine is present on asparagine 258. 2 Laminin G-like domains span residues 299 to 475 (LLYL…NKHC) and 484 to 665 (YYPG…AHSC). Asparagine 499 and asparagine 509 each carry an N-linked (GlcNAc...) asparagine glycan.

In terms of processing, the iron and 2-oxoglutarate dependent 3-hydroxylation of aspartate and asparagine is (R) stereospecific within EGF domains. In terms of tissue distribution, plasma.

It is found in the secreted. Its function is as follows. Anticoagulant plasma protein; it is a cofactor to activated protein C in the degradation of coagulation factors Va and VIIIa. It helps to prevent coagulation and stimulating fibrinolysis. The protein is Vitamin K-dependent protein S (PROS1) of Bos taurus (Bovine).